The sequence spans 604 residues: MLTGQHHIPGIESPLMVVLWRVAAGVFLPLVPTMAVFGNVLVILSVYRERNLQTVTNMLIVSLAVSDLFVAIGVMSFGVYYEWNGFKWGLGSFFCHVYQALDVACSTASILNLLAISLDRYIAIGHPISYAQYGARGGRAMISITIVWGVSCAVALPLLLGVNPMENDQCELANPWFNMISSIFSFFIPCIAMIILYTIIFRRLRQRERARSLRQAQRSETDKISSALLGGAQIARQMGKHFKNRTDQILLEISFQTSSFPTISESSDDGSTISPMINSFNNFLPKKSQYPSTLIPAIPECGSMPNLTIIERPAPPEKEKDIELSIMDLHDTVEMLDDKYTSAMITRSFGEELEEILPFIDGSTSVKNSREQLHATRSNTSTTRLLDVKPELRSISVPSIQDEKKMNSRPPENPFAHQNGTNKQRLLPNPGILMKSKSTTLLKTNGYLDTDSLNNNRNSHKKSTADLLPNDDYSFTDSMRVYKNRLFKSLSRATSGWNKPRPSRHMVKKATKQMRREHKATVTLAVVLAVFLFCWLPFFILHLSNSICLVIDSNSDCIGFLPLYLATWLGYLNSSLNPLIYTVFDQRFRNAFRNILSCGFFKKR.

Residues 1-23 lie on the Extracellular side of the membrane; it reads MLTGQHHIPGIESPLMVVLWRVA. Residues 24–44 traverse the membrane as a helical segment; that stretch reads AGVFLPLVPTMAVFGNVLVIL. The Cytoplasmic segment spans residues 45-58; it reads SVYRERNLQTVTNM. A helical membrane pass occupies residues 59-79; the sequence is LIVSLAVSDLFVAIGVMSFGV. Residues 80 to 96 lie on the Extracellular side of the membrane; it reads YYEWNGFKWGLGSFFCH. Cys-95 and Cys-170 are disulfide-bonded. The helical transmembrane segment at 97–117 threads the bilayer; the sequence is VYQALDVACSTASILNLLAIS. Residues 118–141 lie on the Cytoplasmic side of the membrane; the sequence is LDRYIAIGHPISYAQYGARGGRAM. Residues 142–162 form a helical membrane-spanning segment; sequence ISITIVWGVSCAVALPLLLGV. At 163–179 the chain is on the extracellular side; that stretch reads NPMENDQCELANPWFNM. Residues 180–200 traverse the membrane as a helical segment; that stretch reads ISSIFSFFIPCIAMIILYTII. Residues 201–520 are Cytoplasmic-facing; it reads FRRLRQRERA…TKQMRREHKA (320 aa). The segment at 399–430 is disordered; the sequence is SIQDEKKMNSRPPENPFAHQNGTNKQRLLPNP. The helical transmembrane segment at 521–541 threads the bilayer; sequence TVTLAVVLAVFLFCWLPFFIL. The Extracellular segment spans residues 542 to 559; it reads HLSNSICLVIDSNSDCIG. A helical membrane pass occupies residues 560-580; sequence FLPLYLATWLGYLNSSLNPLI. Topologically, residues 581–604 are cytoplasmic; that stretch reads YTVFDQRFRNAFRNILSCGFFKKR.

The protein belongs to the G-protein coupled receptor 1 family.

It is found in the cell membrane. Receptor for dopamine. The activity of this receptor is mediated by G proteins which activate adenylyl cyclase. In terms of antagonist responses, would be classed with the D2-like dopamine receptor group. Mediates the effect of dopamine on the inhibition of locomotion. Acts as an antagonist of dop-1. This is Dopamine receptor 3 from Caenorhabditis briggsae.